The primary structure comprises 604 residues: MLIIFKELTKQFEQSLLDSLEKNDKRGEFDNLRKNLVTQSSKEEFGDYQCNVCLCLSKIYKKKPREISEDFVYLLNKNKSISKLCKSLEIAGPGFINIKLKDEVLINEIKSNIQCPRAGIPLIKKDLDSGLSNKVIVDFSSPNIAKEMHVGHLRSTIIGDSISRIFELRGYQVLRLNHVGDWGTQFGMLITQLKDLYSNDLEEIGKIKISDLVEFYKASKKRFDNESEFQKRSREEVVKLQSGDSKSIQAWKLLCDQSRKEFDEIYKNLKIKIKERGESFYNPFLKSVIEDLKFKKILIEDQGAKCVFLDGMTNKEGKPLPLIVQKKDGGFNYATTDLAAIRYRFNKAPNGDDASRIIYVTDHGQANHFAGVFQVAKKAKWIPDKCQVDHVPFGLVQGIDGKKLKTREGETIRLKDLLNEAVRRAKEDLLKRLEDEDRYETEEFIANTSRIIGLGAVKYADLSQNRITNYQFSFDKMLSLNGNTAPYLLYTLVRISGIKRKNDFVYDSEDFQYINYEHKSEWKLIRKLLKFDEVIISIEKDLMPNRLCNYLFELCQTFNRFYDQVPILKEEKNIKISRLNLCDLTAKTLKLSLELLGIETLERM.

The 'HIGH' region signature appears at 142–152 (PNIAKEMHVGH).

It belongs to the class-I aminoacyl-tRNA synthetase family. Monomer.

It localises to the cytoplasm. The catalysed reaction is tRNA(Arg) + L-arginine + ATP = L-arginyl-tRNA(Arg) + AMP + diphosphate. In Prochlorococcus marinus (strain MIT 9312), this protein is Arginine--tRNA ligase.